The primary structure comprises 495 residues: UDP-N-acetylmuramoyl-L-alanyl-D-glutamate--2,6-diaminopimelate ligase (495 aa).

Ser29 serves as a coordination point for UDP-N-acetyl-alpha-D-muramoyl-L-alanyl-D-glutamate. ATP is bound at residue 111 to 117 (GTNGKTS). Residues 153 to 154 (TT), Ser180, Gln186, and Arg188 contribute to the UDP-N-acetyl-alpha-D-muramoyl-L-alanyl-D-glutamate site. An N6-carboxylysine modification is found at Lys220. Residues Arg384, 408–411 (DNPR), Gly459, and Glu463 each bind meso-2,6-diaminopimelate. The Meso-diaminopimelate recognition motif motif lies at 408 to 411 (DNPR).

The protein belongs to the MurCDEF family. MurE subfamily. Requires Mg(2+) as cofactor. In terms of processing, carboxylation is probably crucial for Mg(2+) binding and, consequently, for the gamma-phosphate positioning of ATP.

It is found in the cytoplasm. It catalyses the reaction UDP-N-acetyl-alpha-D-muramoyl-L-alanyl-D-glutamate + meso-2,6-diaminopimelate + ATP = UDP-N-acetyl-alpha-D-muramoyl-L-alanyl-gamma-D-glutamyl-meso-2,6-diaminopimelate + ADP + phosphate + H(+). The protein operates within cell wall biogenesis; peptidoglycan biosynthesis. Its function is as follows. Catalyzes the addition of meso-diaminopimelic acid to the nucleotide precursor UDP-N-acetylmuramoyl-L-alanyl-D-glutamate (UMAG) in the biosynthesis of bacterial cell-wall peptidoglycan. This chain is UDP-N-acetylmuramoyl-L-alanyl-D-glutamate--2,6-diaminopimelate ligase, found in Xylella fastidiosa (strain Temecula1 / ATCC 700964).